The primary structure comprises 170 residues: Large ribosomal subunit protein bL17 (170 aa).

Low complexity predominate over residues 124-134; it reads AAEAPKAAKAA. The segment at 124-170 is disordered; the sequence is AAEAPKAAKAAPVKEAKPAAEEAPAKPKRTRKPKADEADAEAAKEEN. Basic and acidic residues-rich tracts occupy residues 135-148 and 156-170; these read PVKEAKPAAEEAPA and PKADEADAEAAKEEN.

The protein belongs to the bacterial ribosomal protein bL17 family. As to quaternary structure, part of the 50S ribosomal subunit. Contacts protein L32.

The protein is Large ribosomal subunit protein bL17 of Desulfovibrio desulfuricans (strain ATCC 27774 / DSM 6949 / MB).